We begin with the raw amino-acid sequence, 348 residues long: Protein RecA (348 aa).

An ATP-binding site is contributed by 67-74; that stretch reads GPESSGKT.

Belongs to the RecA family.

The protein resides in the cytoplasm. Functionally, can catalyze the hydrolysis of ATP in the presence of single-stranded DNA, the ATP-dependent uptake of single-stranded DNA by duplex DNA, and the ATP-dependent hybridization of homologous single-stranded DNAs. It interacts with LexA causing its activation and leading to its autocatalytic cleavage. In Salinispora tropica (strain ATCC BAA-916 / DSM 44818 / JCM 13857 / NBRC 105044 / CNB-440), this protein is Protein RecA.